The primary structure comprises 101 residues: Small ribosomal subunit protein uS10 (101 aa).

Belongs to the universal ribosomal protein uS10 family. Part of the 30S ribosomal subunit.

Its function is as follows. Involved in the binding of tRNA to the ribosomes. The protein is Small ribosomal subunit protein uS10 of Corynebacterium jeikeium (strain K411).